Here is a 147-residue protein sequence, read N- to C-terminus: Hemoglobin subunit beta (147 aa).

N-acetylvaline is present on valine 2. A Globin domain is found at 3 to 147; sequence HLTGEEKAAV…VANALAHKYH (145 aa). Threonine 13 carries the phosphothreonine modification. Position 45 is a phosphoserine (serine 45). Position 60 is an N6-acetyllysine (lysine 60). Histidine 64 contacts heme b. N6-acetyllysine is present on lysine 83. Histidine 93 provides a ligand contact to heme b. At cysteine 94 the chain carries S-nitrosocysteine. Position 145 is an N6-acetyllysine (lysine 145).

It belongs to the globin family. In terms of assembly, heterotetramer of two alpha chains and two beta chains. As to expression, red blood cells.

Its function is as follows. Involved in oxygen transport from the lung to the various peripheral tissues. The polypeptide is Hemoglobin subunit beta (HBB) (Ateles belzebuth (White-bellied spider monkey)).